The chain runs to 249 residues: Caffeoyl-CoA O-methyltransferase 1 (249 aa).

Substrate is bound at residue Lys-23. S-adenosyl-L-methionine contacts are provided by residues Thr-65, Glu-87, 89 to 90 (GV), Ser-95, Asp-113, and Ala-142. Asp-165 serves as a coordination point for substrate. Residue Asp-165 participates in a divalent metal cation binding. Asp-167 contacts S-adenosyl-L-methionine. The a divalent metal cation site is built by Asp-191 and Asn-192. A substrate-binding site is contributed by Asn-196.

Belongs to the class I-like SAM-binding methyltransferase superfamily. Cation-dependent O-methyltransferase family. CCoAMT subfamily. Requires a divalent metal cation as cofactor. As to expression, mostly expressed in petal limbs and tubes, and, at low levels, in flower buds, stamens, pistils, stems, roots and leaves.

The protein localises to the cytoplasm. Its subcellular location is the cytosol. It catalyses the reaction (E)-caffeoyl-CoA + S-adenosyl-L-methionine = (E)-feruloyl-CoA + S-adenosyl-L-homocysteine + H(+). The catalysed reaction is (E)-5-hydroxyferuloyl-CoA + S-adenosyl-L-methionine = (E)-sinapoyl-CoA + S-adenosyl-L-homocysteine + H(+). It functions in the pathway aromatic compound metabolism; phenylpropanoid biosynthesis. Involved in the production of floral volatile phenylpropanoids in flowers of fragrant cultivars (e.g. cv. Mitchell and cv. V26) from cinnamic acid, a common precursor with the anthocyanin biosynthesis pathway involved in flower pigmentation. Methylates caffeoyl-CoA to feruloyl-CoA, also able to methylate 5-hydroxyferuloyl-CoA. The sequence is that of Caffeoyl-CoA O-methyltransferase 1 from Petunia hybrida (Petunia).